Consider the following 540-residue polypeptide: Chaperonin GroEL 2/3 (540 aa).

ATP-binding positions include 30–33 (TLGP), K51, 87–91 (DGTTT), G415, 479–481 (NAA), and D495.

The protein belongs to the chaperonin (HSP60) family. As to quaternary structure, forms a cylinder of 14 subunits composed of two heptameric rings stacked back-to-back. Interacts with the co-chaperonin GroES.

It localises to the cytoplasm. It carries out the reaction ATP + H2O + a folded polypeptide = ADP + phosphate + an unfolded polypeptide.. In terms of biological role, together with its co-chaperonin GroES, plays an essential role in assisting protein folding. The GroEL-GroES system forms a nano-cage that allows encapsulation of the non-native substrate proteins and provides a physical environment optimized to promote and accelerate protein folding. In Paraburkholderia xenovorans (strain LB400), this protein is Chaperonin GroEL 2/3.